The following is a 32-amino-acid chain: Mu-theraphotoxin-Se1a (32 aa).

3 cysteine pairs are disulfide-bonded: Cys2–Cys17, Cys9–Cys22, and Cys16–Cys28.

Belongs to the neurotoxin 10 (Hwtx-1) family. As to expression, expressed by the venom gland.

The protein localises to the secreted. In terms of biological role, voltage-gated sodium channel Nav1.7/SCN9A inhibitor. The sequence is that of Mu-theraphotoxin-Se1a from Selenocosmia effera (Tarantula spider).